Reading from the N-terminus, the 247-residue chain is Probable transcriptional regulatory protein plu2109 (247 aa).

This sequence belongs to the TACO1 family.

The protein resides in the cytoplasm. The chain is Probable transcriptional regulatory protein plu2109 from Photorhabdus laumondii subsp. laumondii (strain DSM 15139 / CIP 105565 / TT01) (Photorhabdus luminescens subsp. laumondii).